We begin with the raw amino-acid sequence, 201 residues long: Glutathione peroxidase 1 (201 aa).

Residues serine 7 and serine 32 each carry the phosphoserine modification. Residue selenocysteine 47 is part of the active site. Residue selenocysteine 47 is a non-standard amino acid, selenocysteine. N6-acetyllysine; alternate occurs at positions 62, 86, and 112. Lysine 62, lysine 86, and lysine 112 each carry N6-succinyllysine; alternate. Lysine 119 is modified (N6-acetyllysine). Lysine 146 carries the post-translational modification N6-acetyllysine; alternate. N6-succinyllysine; alternate is present on lysine 146. At serine 195 the chain carries Phosphoserine.

Belongs to the glutathione peroxidase family. Homotetramer. Interacts with MIEN1. Post-translationally, during periods of oxidative stress, Sec-47 may react with a superoxide radical, irreversibly lose hydroselenide and be converted to dehydroalanine. Expressed in liver, kidney, lung, brain and heart.

The protein localises to the cytoplasm. It is found in the mitochondrion. It carries out the reaction 2 glutathione + H2O2 = glutathione disulfide + 2 H2O. The catalysed reaction is a hydroperoxy polyunsaturated fatty acid + 2 glutathione = a hydroxy polyunsaturated fatty acid + glutathione disulfide + H2O. The enzyme catalyses tert-butyl hydroperoxide + 2 glutathione = tert-butanol + glutathione disulfide + H2O. It catalyses the reaction cumene hydroperoxide + 2 glutathione = 2-phenylpropan-2-ol + glutathione disulfide + H2O. It carries out the reaction (13S)-hydroperoxy-(9Z,11E)-octadecadienoate + 2 glutathione = (13S)-hydroxy-(9Z,11E)-octadecadienoate + glutathione disulfide + H2O. The catalysed reaction is (9S)-hydroperoxy-(10E,12Z)-octadecadienoate + 2 glutathione = (9S)-hydroxy-(10E,12Z)-octadecadienoate + glutathione disulfide + H2O. The enzyme catalyses (5S)-hydroperoxy-(6E,8Z,11Z,14Z)-eicosatetraenoate + 2 glutathione = (5S)-hydroxy-(6E,8Z,11Z,14Z)-eicosatetraenoate + glutathione disulfide + H2O. It catalyses the reaction (12S)-hydroperoxy-(5Z,8Z,10E,14Z)-eicosatetraenoate + 2 glutathione = (12S)-hydroxy-(5Z,8Z,10E,14Z)-eicosatetraenoate + glutathione disulfide + H2O. It carries out the reaction (12R)-hydroperoxy-(5Z,8Z,10E,14Z)-eicosatetraenoate + 2 glutathione = (12R)-hydroxy-(5Z,8Z,10E,14Z)-eicosatetraenoate + glutathione disulfide + H2O. The catalysed reaction is (15S)-hydroperoxy-(5Z,8Z,11Z,13E)-eicosatetraenoate + 2 glutathione = (15S)-hydroxy-(5Z,8Z,11Z,13E)-eicosatetraenoate + glutathione disulfide + H2O. The enzyme catalyses (5S)-hydroperoxy-(6E,8Z,11Z,14Z,17Z)-eicosapentaenoate + 2 glutathione = (5S)-hydroxy-(6E,8Z,11Z,14Z,17Z)-eicosapentaenoate + glutathione disulfide + H2O. It catalyses the reaction (12S)-hydroperoxy-(5Z,8Z,10E,14Z,17Z)-eicosapentaenoate + 2 glutathione = (12S)-hydroxy-(5Z,8Z,10E,14Z,17Z)-eicosapentaenoate + glutathione disulfide + H2O. It carries out the reaction (15S)-hydroperoxy-(5Z,8Z,11Z,13E,17Z)-eicosapentaenoate + 2 glutathione = (15S)-hydroxy-(5Z,8Z,11Z,13E,17Z)-eicosapentaenoate + glutathione disulfide + H2O. The catalysed reaction is (15S)-hydroperoxy-(11Z,13E)-eicosadienoate + 2 glutathione = (15S)-hydroxy-(11Z,13E)-eicosadienoate + glutathione disulfide + H2O. The enzyme catalyses (17S)-hydroperoxy-(4Z,7Z,10Z,13Z,15E,19Z)-docosahexaenoate + 2 glutathione = (17S)-hydroxy-(4Z,7Z,10Z,13Z,15E,19Z)-docosahexaenoate + glutathione disulfide + H2O. In terms of biological role, catalyzes the reduction of hydroperoxides in a glutathione-dependent manner thus regulating cellular redox homeostasis. Can reduce small soluble hydroperoxides such as H2O2, cumene hydroperoxide and tert-butyl hydroperoxide, as well as several fatty acid-derived hydroperoxides. In platelets catalyzes the reduction of 12-hydroperoxyeicosatetraenoic acid, the primary product of the arachidonate 12-lipoxygenase pathway. The protein is Glutathione peroxidase 1 of Mus musculus (Mouse).